Consider the following 106-residue polypeptide: uncharacterized protein (106 aa).

Disordered stretches follow at residues 33–64 (FKTSTRSTGKKRSKGSTSQDGKKQESLESRND) and 87–106 (NLTGLESGGSSPPFSLAVSK). Over residues 52-63 (DGKKQESLESRN) the composition is skewed to basic and acidic residues. A compositionally biased stretch (polar residues) spans 87-99 (NLTGLESGGSSPP).

Its subcellular location is the mitochondrion. This is an uncharacterized protein from Arabidopsis thaliana (Mouse-ear cress).